A 639-amino-acid chain; its full sequence is UvrABC system protein C (639 aa).

The GIY-YIG domain occupies 20-97; sequence ERSGVYRMFD…IKKFQPKFNI (78 aa). Positions 207–242 constitute a UVR domain; sequence KELQENLSRKMEELSSQMRFEEAAEIRDRIKALSYV.

Belongs to the UvrC family. Interacts with UvrB in an incision complex.

It is found in the cytoplasm. Functionally, the UvrABC repair system catalyzes the recognition and processing of DNA lesions. UvrC both incises the 5' and 3' sides of the lesion. The N-terminal half is responsible for the 3' incision and the C-terminal half is responsible for the 5' incision. This is UvrABC system protein C from Rickettsia rickettsii (strain Iowa).